A 315-amino-acid polypeptide reads, in one-letter code: Olfactory receptor 51L1 (315 aa).

The Extracellular segment spans residues methionine 1–serine 27. Asparagine 5 is a glycosylation site (N-linked (GlcNAc...) asparagine). The helical transmembrane segment at tryptophan 28–leucine 48 threads the bilayer. Topologically, residues serine 49 to serine 56 are cytoplasmic. The helical transmembrane segment at leucine 57 to leucine 77 threads the bilayer. Topologically, residues serine 78–alanine 101 are extracellular. Cysteines 99 and 191 form a disulfide. A helical transmembrane segment spans residues glutamine 102–phenylalanine 122. The Cytoplasmic segment spans residues aspartate 123–serine 141. Residues valine 142–proline 162 traverse the membrane as a helical segment. Over leucine 163 to serine 198 the chain is Extracellular. Residues isoleucine 199–serine 219 traverse the membrane as a helical segment. Over tyrosine 220 to alanine 239 the chain is Cytoplasmic. Residues leucine 240–valine 260 traverse the membrane as a helical segment. Residues serine 261–histidine 275 lie on the Extracellular side of the membrane. The chain crosses the membrane as a helical span at residues isoleucine 276–valine 296. Residues arginine 297–phenylalanine 315 are Cytoplasmic-facing.

The protein belongs to the G-protein coupled receptor 1 family.

The protein resides in the cell membrane. Functionally, odorant receptor. The polypeptide is Olfactory receptor 51L1 (OR51L1) (Homo sapiens (Human)).